We begin with the raw amino-acid sequence, 2633 residues long: Non-reducing polyketide synthase sor2 (2633 aa).

Positions 67–237 (VSNAQKLAEW…TTSTRTVAAL (171 aa)) are N-terminal acylcarrier protein transacylase domain (SAT). Cysteine 140 serves as the catalytic Nucleophile; for transacylase activity. Histidine 258 serves as the catalytic Proton donor/acceptor; for transacylase activity. A Ketosynthase family 3 (KS3) domain is found at 389–814 (ENDIAVIGMA…GSNASVIIKQ (426 aa)). Residues cysteine 561, histidine 696, and histidine 737 each act as for beta-ketoacyl synthase activity in the active site. The malonyl-CoA:ACP transacylase (MAT) domain stretch occupies residues 928-1239 (CFGGQVSTFV…SKASSQLSDV (312 aa)). Residues 1307 to 1437 (PQPVGLYTLL…GQLHFQASDD (131 aa)) form an N-terminal hotdog fold region. The PKS/mFAS DH domain maps to 1307–1627 (PQPVGLYTLL…YAPVSLDQLF (321 aa)). Positions 1338–1509 (MSDHAIGKAQ…SNESAGRLVR (172 aa)) are product template (PT) domain. The C-terminal hotdog fold stretch occupies residues 1464–1627 (GRSDEVIQGQ…YAPVSLDQLF (164 aa)). The Carrier domain maps to 1684-1758 (EELWLRLRPV…GILKFLQSTL (75 aa)). O-(pantetheine 4'-phosphoryl)serine is present on serine 1718. Residues 1762-1792 (DVHDSSETMSTVSSDGNVHSPPTSGSEMASP) form a disordered region. Over residues 1768-1790 (ETMSTVSSDGNVHSPPTSGSEMA) the composition is skewed to polar residues. Residues 1982 to 2166 (FELMADFLTR…ASGFKHVRWT (185 aa)) are methyltransferase domain. Residues 2253–2495 (VTGATGSLGS…TLRALPDVDG (243 aa)) form an NADPH-binding (R) domain region.

Pantetheine 4'-phosphate serves as cofactor.

Its pathway is secondary metabolite biosynthesis. Non-reducing polyketide synthase; part of the SOR gene cluster that mediates the biosynthesis of sorbicillinoids, a diverse group of yellow secondary metabolites that restrict growth of competing pathogenic fungi but not of bacteria. Sorbicillinoids biosynthesis requires the action of two PKSs. The SOR cluster is required for the production of trichodimerol and dihydrotrichotetronin, with sor2 being sufficient for production of trichodimerol, but not dihydrotrichotetronin in the light. Sor1 iteratively combines three acetyl units and the growing chain is modified by the ketoacyl reductase subunit, and optional by the enoyl reductase subunit in the second cycle. The polyketide is then handed over to the PKS sor2, which adds three more acetyl units, and two methyl groups. Sor2 releases an aldehyde, which undergoes spontaneous cyclization resulting in the formation of sorbicillin or 2',3'-dihydrosorbicillin. The monooxygenase sor5 oxidizes sorbicillin and 2',3'-dihydrosorbicillin to 2',3'-dihydrosorbicillinol and sorbicillinol, respectively. The oxidoreductase sor8 further converts sorbicillinol into oxosorbicillinol. Sorbicillinol is the building block for the other sorbicillinoids such as disorbicillinol, bisvertinolon, dihydrobisvertinolone, and dihydrotrichotetronine. The sequence is that of Non-reducing polyketide synthase sor2 from Hypocrea jecorina (strain QM6a) (Trichoderma reesei).